Here is an 87-residue protein sequence, read N- to C-terminus: Small ribosomal subunit protein bS20 (87 aa).

Positions 1–26 (MANIKSAKKRAVQSEKARKHNASRRS) are disordered.

It belongs to the bacterial ribosomal protein bS20 family.

Its function is as follows. Binds directly to 16S ribosomal RNA. In Klebsiella pneumoniae (strain 342), this protein is Small ribosomal subunit protein bS20.